A 166-amino-acid chain; its full sequence is Olee1-like protein (166 aa).

The signal sequence occupies residues Met1–Ser23. Cystine bridges form between Cys35/Cys106, Cys38/Cys150, and Cys59/Cys94.

This sequence belongs to the Ole e I family.

Its subcellular location is the secreted. In Betula pendula (European white birch), this protein is Olee1-like protein.